Consider the following 251-residue polypeptide: PF03932 family protein CutC (251 aa).

It belongs to the CutC family.

It localises to the cytoplasm. In Bacteroides fragilis (strain YCH46), this protein is PF03932 family protein CutC.